Consider the following 212-residue polypeptide: Tubulin alpha chain (212 aa).

The GTP site is built by Asn-3 and Asn-25. Glu-51 is a catalytic residue.

The protein belongs to the tubulin family. Dimer of alpha and beta chains. A typical microtubule is a hollow water-filled tube with an outer diameter of 25 nm and an inner diameter of 15 nM. Alpha-beta heterodimers associate head-to-tail to form protofilaments running lengthwise along the microtubule wall with the beta-tubulin subunit facing the microtubule plus end conferring a structural polarity. Microtubules usually have 13 protofilaments but different protofilament numbers can be found in some organisms and specialized cells. The cofactor is Mg(2+).

The protein localises to the cytoplasm. The protein resides in the cytoskeleton. The catalysed reaction is GTP + H2O = GDP + phosphate + H(+). In terms of biological role, tubulin is the major constituent of microtubules, a cylinder consisting of laterally associated linear protofilaments composed of alpha- and beta-tubulin heterodimers. Microtubules grow by the addition of GTP-tubulin dimers to the microtubule end, where a stabilizing cap forms. Below the cap, tubulin dimers are in GDP-bound state, owing to GTPase activity of alpha-tubulin. In Pneumocystis carinii, this protein is Tubulin alpha chain (TUB-A).